Here is a 152-residue protein sequence, read N- to C-terminus: Deoxyuridine 5'-triphosphate nucleotidohydrolase (152 aa).

Residues 71 to 73 (RSG), N84, 88 to 90 (LID), and M98 each bind substrate.

It belongs to the dUTPase family. The cofactor is Mg(2+).

The enzyme catalyses dUTP + H2O = dUMP + diphosphate + H(+). Its pathway is pyrimidine metabolism; dUMP biosynthesis; dUMP from dCTP (dUTP route): step 2/2. Its function is as follows. This enzyme is involved in nucleotide metabolism: it produces dUMP, the immediate precursor of thymidine nucleotides and it decreases the intracellular concentration of dUTP so that uracil cannot be incorporated into DNA. This Shigella flexneri protein is Deoxyuridine 5'-triphosphate nucleotidohydrolase.